The following is a 749-amino-acid chain: Replication restart protein PriA (749 aa).

The 168-residue stretch at 224 to 391 (SLKTSQFHTH…LSGKYVLSRL (168 aa)) folds into the Helicase ATP-binding domain. 237-244 (GITGSGKT) provides a ligand contact to ATP. Positions 333–336 (DEEH) match the DEAH box motif. Zn(2+)-binding residues include cysteine 454, cysteine 457, cysteine 463, cysteine 466, cysteine 481, cysteine 484, cysteine 495, and cysteine 498. Residues 490–658 (DLPQSCPKCL…EYPPFIRLIR (169 aa)) enclose the Helicase C-terminal domain.

The protein belongs to the helicase family. PriA subfamily. Component of the replication restart primosome. It depends on Zn(2+) as a cofactor.

It catalyses the reaction Couples ATP hydrolysis with the unwinding of duplex DNA by translocating in the 3'-5' direction.. It carries out the reaction ATP + H2O = ADP + phosphate + H(+). Functionally, initiates the restart of stalled replication forks, which reloads the replicative helicase on sites other than the origin of replication. Recognizes and binds to abandoned replication forks and remodels them to uncover a helicase loading site. Promotes assembly of the primosome at these replication forks. In Chlamydia pneumoniae (Chlamydophila pneumoniae), this protein is Replication restart protein PriA.